The sequence spans 213 residues: ATP-dependent Clp protease proteolytic subunit (213 aa).

Serine 114 (nucleophile) is an active-site residue. The active site involves histidine 139.

Belongs to the peptidase S14 family. Fourteen ClpP subunits assemble into 2 heptameric rings which stack back to back to give a disk-like structure with a central cavity, resembling the structure of eukaryotic proteasomes.

The protein localises to the cytoplasm. It carries out the reaction Hydrolysis of proteins to small peptides in the presence of ATP and magnesium. alpha-casein is the usual test substrate. In the absence of ATP, only oligopeptides shorter than five residues are hydrolyzed (such as succinyl-Leu-Tyr-|-NHMec, and Leu-Tyr-Leu-|-Tyr-Trp, in which cleavage of the -Tyr-|-Leu- and -Tyr-|-Trp bonds also occurs).. Functionally, cleaves peptides in various proteins in a process that requires ATP hydrolysis. Has a chymotrypsin-like activity. Plays a major role in the degradation of misfolded proteins. The polypeptide is ATP-dependent Clp protease proteolytic subunit (Pseudomonas putida (strain GB-1)).